A 724-amino-acid polypeptide reads, in one-letter code: Polyribonucleotide nucleotidyltransferase (724 aa).

Aspartate 488 and aspartate 494 together coordinate Mg(2+). Positions 555–614 constitute a KH domain; that stretch reads PRMITVKINPEKIRDVIGKGGSTIQALTKETGCTIDIGEDGTITIASTSSEGMAEAKRRI. One can recognise an S1 motif domain in the interval 624–692; the sequence is GKIYNGTVLK…EKGRMRLSIK (69 aa). The tract at residues 697–724 is disordered; that stretch reads EEGDVPVAAPQAPGAGDAASQQQQQQQQ. Positions 701–724 are enriched in low complexity; sequence VPVAAPQAPGAGDAASQQQQQQQQ.

It belongs to the polyribonucleotide nucleotidyltransferase family. It depends on Mg(2+) as a cofactor.

It localises to the cytoplasm. It catalyses the reaction RNA(n+1) + phosphate = RNA(n) + a ribonucleoside 5'-diphosphate. Its function is as follows. Involved in mRNA degradation. Catalyzes the phosphorolysis of single-stranded polyribonucleotides processively in the 3'- to 5'-direction. This chain is Polyribonucleotide nucleotidyltransferase, found in Ralstonia pickettii (strain 12J).